Here is a 1039-residue protein sequence, read N- to C-terminus: Integrin alpha-4 (1039 aa).

The signal sequence occupies residues 1 to 40; sequence MFSTKSAWLRNGGADQGPRGIALREAVMLLLYFGVPTGPS. Over 41 to 983 the chain is Extracellular; that stretch reads YNLDPENALL…LHHQRPKRHF (943 aa). FG-GAP repeat units follow at residues 42 to 107, 117 to 184, 193 to 244, 246 to 298, 299 to 358, 362 to 419, and 423 to 485; these read NLDP…PNQT, SGEP…TELS, DYTR…QYKA, VDRQ…ENEL, NIVY…GAVM, ERVL…GISS, and QRIE…HPES. N86, N105, and N145 each carry an N-linked (GlcNAc...) asparagine glycan. The cysteines at positions 98 and 108 are disulfide-linked. Intrachain disulfides connect C151–C172 and C190–C205. An N-linked (GlcNAc...) asparagine glycan is attached at N236. Residues D321, N323, D325, D329, D384, D386, D388, D392, D446, D448, N450, Y452, and D454 each contribute to the Ca(2+) site. N487 carries an N-linked (GlcNAc...) asparagine glycan. 2 disulfide bridges follow: C493–C502 and C508–C564. N-linked (GlcNAc...) asparagine glycans are attached at residues N525 and N545. Positions 613–623 match the SG1 motif; sequence KKEKDVIRKMI. C629 and C634 are disulfide-bonded. 3 N-linked (GlcNAc...) asparagine glycosylation sites follow: N633, N652, and N667. A disulfide bridge links C705 with C718. N813 and N828 each carry an N-linked (GlcNAc...) asparagine glycan. 2 disulfide bridges follow: C859/C897 and C904/C909. A helical transmembrane segment spans residues 984–1007; the sequence is TIIIITISLLLGLIVLLLISCVMW. Over 1008-1039 the chain is Cytoplasmic; it reads KAGFFKRQYKSILQEENRRDSWSYVNSKSNDD. The short motif at 1010-1014 is the GFFKR motif element; that stretch reads GFFKR. Phosphoserine is present on S1028.

This sequence belongs to the integrin alpha chain family. In terms of assembly, heterodimer of an alpha and a beta subunit. The alpha subunit can sometimes be cleaved into two non-covalently associated fragments. Alpha-4 associates with either beta-1 or beta-7. Alpha-4 interacts with PXN, LPXN, and TGFB1I1/HIC5. Interacts with CSPG4 through CSPG4 chondroitin sulfate glycosaminoglycan. Interacts with JAML; integrin alpha-4/beta-1 may regulate leukocyte to endothelial cells adhesion by controlling JAML homodimerization. ITGA4:ITGB1 is found in a ternary complex with CX3CR1 and CX3CL1. Interacts with MDK. ITGA4:ITGB1 interacts with MDK; this interaction mediates MDK-induced osteoblast cells migration through PXN phosphorylation. Integrin ITGA4:ITGB1 interacts with SVEP1 (via Sushi domain 21); thereby inhibits Ca(2+) intracellular signaling and as a result represses vasocontraction. ITGA4:ITGB1 interacts with SELP. ITGA4:ITGB1 interacts with BCAM. Post-translationally, phosphorylation on Ser-1028 inhibits PXN binding. As to expression, expressed in the media layer of the arterial wall (at protein level). Weakly expression in the thymus, spleen and mesenteric lymph nodes.

The protein resides in the membrane. Its function is as follows. Integrins alpha-4/beta-1 (VLA-4 or LPAM-2) and alpha-4/beta-7 (LPAM-1) are receptors for fibronectin. They recognize one or more domains within the alternatively spliced CS-1 and CS-5 regions of fibronectin. They are also receptors for VCAM1. Integrin alpha-4/beta-1 recognizes the sequence Q-I-D-S in VCAM1. Integrin alpha-4/beta-7 is also a receptor for MADCAM1. It recognizes the sequence L-D-T in MADCAM1. On activated endothelial cells integrin VLA-4 triggers homotypic aggregation for most VLA-4-positive leukocyte cell lines. It may also participate in cytolytic T-cell interactions with target cells. ITGA4:ITGB1 binds to fractalkine (CX3CL1) and may act as its coreceptor in CX3CR1-dependent fractalkine signaling. ITGA4:ITGB1 binds to PLA2G2A via a site (site 2) which is distinct from the classical ligand-binding site (site 1) and this induces integrin conformational changes and enhanced ligand binding to site 1. Integrin ITGA4:ITGB1 represses PRKCA-mediated L-type voltage-gated channel Ca(2+) influx and ROCK-mediated calcium sensitivity in vascular smooth muscle cells via its interaction with SVEP1, thereby inhibiting vasocontraction. The chain is Integrin alpha-4 (Itga4) from Mus musculus (Mouse).